We begin with the raw amino-acid sequence, 375 residues long: Growth/differentiation factor 8 (375 aa).

An N-terminal signal peptide occupies residues 1 to 18; that stretch reads MQKLQISVYIYLFMLIVA. A propeptide spanning residues 19–266 is cleaved from the precursor; the sequence is GPVDLNENSE…VTDTPKRSRR (248 aa). The N-linked (GlcNAc...) asparagine glycan is linked to N71. 4 cysteine pairs are disulfide-bonded: C272/C282, C281/C340, C309/C372, and C313/C374.

Belongs to the TGF-beta family. In terms of assembly, homodimer; disulfide-linked. Interacts with WFIKKN2, leading to inhibit its activity. Interacts with FSTL3. In terms of processing, synthesized as large precursor molecule that undergoes proteolytic cleavage to generate an N-terminal propeptide and a disulfide linked C-terminal dimer, which is the biologically active molecule. The circulating form consists of a latent complex of the C-terminal dimer and other proteins, including its propeptide, which maintain the C-terminal dimer in a latent, inactive state. Ligand activation requires additional cleavage of the prodomain by a tolloid-like metalloproteinase.

It localises to the secreted. Acts specifically as a negative regulator of skeletal muscle growth. This chain is Growth/differentiation factor 8 (MSTN), found in Lepus capensis (Brown hare).